A 196-amino-acid polypeptide reads, in one-letter code: Molybdopterin synthase catalytic subunit (196 aa).

A disordered region spans residues 1-29 (MSTLPSTDPPPLPASTSSQQPAVHIPPPS). Residues 145 to 146 (HR), Lys-161, and 168 to 170 (KRE) each bind substrate. Residues 174-196 (GEPPGQGEWRANRDTDPEGKSTS) are disordered. Residues 183–196 (RANRDTDPEGKSTS) show a composition bias toward basic and acidic residues.

The protein belongs to the MoaE family. MOCS2B subfamily. Heterotetramer; composed of 2 small (MOCS2A) and 2 large (MOCS2B) subunits.

It localises to the cytoplasm. It catalyses the reaction 2 [molybdopterin-synthase sulfur-carrier protein]-C-terminal-Gly-aminoethanethioate + cyclic pyranopterin phosphate + H2O = molybdopterin + 2 [molybdopterin-synthase sulfur-carrier protein]-C-terminal Gly-Gly + 2 H(+). Its pathway is cofactor biosynthesis; molybdopterin biosynthesis. Functionally, catalytic subunit of the molybdopterin synthase complex, a complex that catalyzes the conversion of precursor Z into molybdopterin. Acts by mediating the incorporation of 2 sulfur atoms from thiocarboxylated MOCS2A into precursor Z to generate a dithiolene group. The protein is Molybdopterin synthase catalytic subunit of Coccidioides immitis (strain RS) (Valley fever fungus).